The chain runs to 169 residues: uncharacterized protein (169 aa).

Residues 1-91 (MFSSTFRRLA…NKEQYTVRCL (91 aa)) constitute a mitochondrion transit peptide. A disordered region spans residues 54 to 76 (PQPKSPGSLPSSTRTAPNPNGEE). The segment covering 61-71 (SLPSSTRTAPN) has biased composition (polar residues).

It localises to the mitochondrion. This is an uncharacterized protein from Trypanosoma brucei brucei (strain 927/4 GUTat10.1).